A 319-amino-acid polypeptide reads, in one-letter code: Carbonic anhydrase 6 (319 aa).

An N-terminal signal peptide occupies residues 1-14; that stretch reads MITLLFLLVVGAQA. One can recognise an Alpha-carbonic anhydrase domain in the interval 16-273; that stretch reads HEWTYSEGVL…LNHRVVEANF (258 aa). A disulfide bridge links Cys37 with Cys219. An N-linked (GlcNAc...) asparagine glycan is attached at Asn62. His80 functions as the Proton donor/acceptor in the catalytic mechanism. Zn(2+) contacts are provided by His106, His108, and His133. 215–216 contributes to the substrate binding site; that stretch reads TT. N-linked (GlcNAc...) asparagine glycosylation is present at Asn251.

It belongs to the alpha-carbonic anhydrase family. Requires Zn(2+) as cofactor. As to expression, major constituent of saliva.

The protein resides in the secreted. It carries out the reaction hydrogencarbonate + H(+) = CO2 + H2O. Functionally, reversible hydration of carbon dioxide. Its role in saliva is unknown. This Bos taurus (Bovine) protein is Carbonic anhydrase 6 (CA6).